The sequence spans 3032 residues: DmX-like protein 2 (3032 aa).

WD repeat units follow at residues 108 to 145 (FLSS…ILEE), 167 to 207 (KTSV…KSSI), and 230 to 278 (AHPR…EDCL). S326 carries the post-translational modification Phosphoserine. The interval 418-486 (QLDHESDDAD…HPRPSISMPL (69 aa)) is disordered. Residues 422–434 (ESDDADREDEERS) show a composition bias toward acidic residues. Residues 435-474 (QDERERGLRMKLDHELSLDRESEAGTGSSEHEDGEREGSP) are compositionally biased toward basic and acidic residues. S473 is subject to Phosphoserine. Residues 492–532 (DRKIETLLTEWNKNPDMLFTIHPVDGTFLVWHVKYLDEYNP) form a WD 4 repeat. The segment at 577 to 598 (PSQQEMMSVDSPHGSQLHSPSH) is disordered. S587 carries the post-translational modification Phosphoserine. Polar residues predominate over residues 589–598 (HGSQLHSPSH). WD repeat units follow at residues 594-633 (HSPS…KSAF), 750-802 (LHTS…RKLL), and 879-921 (QPSQ…VQAC). Positions 937–958 (VPGQKNLDSSPETSSSMSSVPH) are disordered. S945 and S946 each carry phosphoserine. The segment covering 945 to 958 (SSPETSSSMSSVPH) has biased composition (low complexity). The WD 8 repeat unit spans residues 1001 to 1038 (LSSSSIYPVCLAPYLVVTTCSDNKVRFWKCCMETNSLG). Residues S1141, S1144, and S1152 each carry the phosphoserine modification. WD repeat units follow at residues 1164-1205 (PNIK…VSDQ) and 1245-1285 (GTPS…GNVD). Residues S1288 and S1399 each carry the phosphoserine modification. The residue at position 1416 (T1416) is a Phosphothreonine. Positions 1443 to 1464 (RISEDSTKKPQSYEDHIESQSE) are disordered. Positions 1444–1461 (ISEDSTKKPQSYEDHIES) are enriched in basic and acidic residues. Residue S1856 is modified to Phosphoserine. The interval 1922 to 1953 (QLDSVSGRMENGPSESKPVSRSDGGSGADWSA) is disordered. Phosphothreonine is present on T2017. The stretch at 2117-2146 (GSYERHQIERRRLQAKREHAERRKLWLQKN) forms a coiled coil. A phosphoserine mark is found at S2394 and S2636. The segment covering 2722-2732 (QPGAASHSSSQ) has biased composition (low complexity). Residues 2722–2744 (QPGAASHSSSQPHPPPSLPWLGS) form a disordered region. WD repeat units lie at residues 2757-2796 (RNLH…QLVC), 2800-2839 (AGNA…SNPK), 2846-2888 (CHSK…GNSL), 2894-2933 (CHDH…LIHT), 2936-2975 (AHDS…LIHS), and 2988-3026 (NIGA…NIPN).

Interacts with MADD and RAB3GAP. In terms of tissue distribution, expressed in the brain and pituitary gland. Detected in the hippocampus, dentate gyrus, hypothalamus, pyriform cortex and the granular and molecular layers of the cerebellum of adult animals. In the hypothalamus, expression is observed in the arcuate nucleus, the ME, the organum vasculosum of the lamina terminalis, and the subfornical organ, the subcommissural organ, and the suprachiasmatic nucleus. Both tanycytes and hypothalamic neurosecretory neurons express the protein. Expressed in the inner and outer hair cells as well as in the spiral ganglion neurons. Expressed in insulin-secreting cells of the islets of Langerhans in the pancreas.

The protein resides in the cytoplasmic vesicle. It is found in the secretory vesicle. It localises to the synaptic vesicle membrane. Its subcellular location is the neuronal dense core vesicle. Functionally, may serve as a scaffold protein for MADD and RAB3GA on synaptic vesicles of neuronal and endocrine homeostatic processes. Plays a role in the brain as a key controller of neuronal and endocrine homeostatic processes. This chain is DmX-like protein 2 (Dmxl2), found in Mus musculus (Mouse).